We begin with the raw amino-acid sequence, 39 residues long: Potassium channel toxin alpha-KTx 31.1 (39 aa).

Disulfide bonds link cysteine 7-cysteine 30, cysteine 13-cysteine 35, and cysteine 17-cysteine 37.

This sequence belongs to the short scorpion toxin superfamily. Potassium channel inhibitor family. Alpha-KTx 31 subfamily. As to expression, expressed by the venom gland.

Its subcellular location is the secreted. In terms of biological role, voltage-gated potassium channel inhibitor. 1 uM of the native toxin inhibits rat Kv1.2/KCNA2 (100% inhibition), and drosophila Shaker IR/Sh (100%), human Kv1.3/KCNA3 (83%), rat Kv1.1/KCNA1 (32%) and rat Kv1.6/KCNA6 (21%). This is Potassium channel toxin alpha-KTx 31.1 from Buthus occitanus tunetanus (Common European scorpion).